Here is a 133-residue protein sequence, read N- to C-terminus: Mediator of RNA polymerase II transcription subunit 10 (133 aa).

Polar residues predominate over residues 1 to 13 (MSTEASTGETPEF). The tract at residues 1 to 28 (MSTEASTGETPEFQSYDHRGSPTQEAMK) is disordered. Positions 15 to 28 (SYDHRGSPTQEAMK) are enriched in basic and acidic residues.

Belongs to the Mediator complex subunit 10 family. In terms of assembly, component of the Mediator complex.

The protein localises to the nucleus. Component of the Mediator complex, a coactivator involved in the regulated transcription of nearly all RNA polymerase II-dependent genes. Mediator functions as a bridge to convey information from gene-specific regulatory proteins to the basal RNA polymerase II transcription machinery. Mediator is recruited to promoters by direct interactions with regulatory proteins and serves as a scaffold for the assembly of a functional preinitiation complex with RNA polymerase II and the general transcription factors. The protein is Mediator of RNA polymerase II transcription subunit 10 (NUT2) of Phaeosphaeria nodorum (strain SN15 / ATCC MYA-4574 / FGSC 10173) (Glume blotch fungus).